A 391-amino-acid chain; its full sequence is Pyruvate dehydrogenase E1 component subunit alpha type II, mitochondrial (391 aa).

A mitochondrion-targeting transit peptide spans S1–S17. Residues H83, Y109, R110, G148, G156, V158, D187, G188, A189, N216, and Y218 each contribute to the pyruvate site. Positions 109 and 110 each coordinate thiamine diphosphate. Thiamine diphosphate contacts are provided by G156, V158, D187, G188, A189, and N216. Mg(2+) is bound at residue D187. 2 residues coordinate Mg(2+): N216 and Y218. H283 contributes to the thiamine diphosphate binding site. Residues S284 and S291 each carry the phosphoserine modification.

As to quaternary structure, heterotetramer of two PDHA2 and two PDHB subunits. The heterotetramer interacts with DLAT, and is part of the multimeric pyruvate dehydrogenase complex that contains multiple copies of pyruvate dehydrogenase (E1), dihydrolipoamide acetyltransferase (DLAT, E2) and lipoamide dehydrogenase (DLD, E3). Thiamine diphosphate serves as cofactor. Requires Mg(2+) as cofactor.

Its subcellular location is the mitochondrion matrix. It carries out the reaction N(6)-[(R)-lipoyl]-L-lysyl-[protein] + pyruvate + H(+) = N(6)-[(R)-S(8)-acetyldihydrolipoyl]-L-lysyl-[protein] + CO2. Pyruvate dehydrogenase activity is inhibited by phosphorylation of PDHA2; it is reactivated by dephosphorylation. In terms of biological role, the pyruvate dehydrogenase complex catalyzes the overall conversion of pyruvate to acetyl-CoA and CO(2), and thereby links the glycolytic pathway to the tricarboxylic cycle. The sequence is that of Pyruvate dehydrogenase E1 component subunit alpha type II, mitochondrial from Ascaris suum (Pig roundworm).